The sequence spans 398 residues: Glia-derived nexin (398 aa).

A signal peptide spans 1 to 19; that stretch reads MNWHLPLFLLASVTLPSIC. N-linked (GlcNAc...) asparagine glycans are attached at residues Asn118 and Asn159.

This sequence belongs to the serpin family.

Its subcellular location is the secreted. It localises to the extracellular space. Functionally, serine protease inhibitor with activity toward thrombin, trypsin, and urokinase. Promotes neurite extension by inhibiting thrombin. Binds heparin. The sequence is that of Glia-derived nexin (SERPINE2) from Homo sapiens (Human).